The sequence spans 82 residues: Small ribosomal subunit protein bS18 (82 aa).

The disordered stretch occupies residues 1 to 25 (MKRNNMKRARMEQSRRPKKNPLKAE).

The protein belongs to the bacterial ribosomal protein bS18 family. As to quaternary structure, part of the 30S ribosomal subunit. Forms a tight heterodimer with protein bS6.

Binds as a heterodimer with protein bS6 to the central domain of the 16S rRNA, where it helps stabilize the platform of the 30S subunit. This chain is Small ribosomal subunit protein bS18, found in Corynebacterium urealyticum (strain ATCC 43042 / DSM 7109).